A 279-amino-acid chain; its full sequence is Tryptophan synthase alpha chain (279 aa).

Catalysis depends on proton acceptor residues Glu50 and Asp61.

It belongs to the TrpA family. In terms of assembly, tetramer of two alpha and two beta chains.

It carries out the reaction (1S,2R)-1-C-(indol-3-yl)glycerol 3-phosphate + L-serine = D-glyceraldehyde 3-phosphate + L-tryptophan + H2O. The protein operates within amino-acid biosynthesis; L-tryptophan biosynthesis; L-tryptophan from chorismate: step 5/5. Functionally, the alpha subunit is responsible for the aldol cleavage of indoleglycerol phosphate to indole and glyceraldehyde 3-phosphate. In Methylobacterium radiotolerans (strain ATCC 27329 / DSM 1819 / JCM 2831 / NBRC 15690 / NCIMB 10815 / 0-1), this protein is Tryptophan synthase alpha chain.